The chain runs to 233 residues: Ribonuclease 3 (233 aa).

One can recognise an RNase III domain in the interval 4–126; it reads LNKLMERLGH…IVGSIYIDAG (123 aa). E39 lines the Mg(2+) pocket. D43 is an active-site residue. D112 and E115 together coordinate Mg(2+). E115 is an active-site residue. The DRBM domain occupies 153–222; it reads DAKSLLQEWL…AKRFLELLDD (70 aa).

The protein belongs to the ribonuclease III family. In terms of assembly, homodimer. It depends on Mg(2+) as a cofactor.

The protein localises to the cytoplasm. The enzyme catalyses Endonucleolytic cleavage to 5'-phosphomonoester.. In terms of biological role, digests double-stranded RNA. Involved in the processing of primary rRNA transcript to yield the immediate precursors to the large and small rRNAs (23S and 16S). Processes some mRNAs, and tRNAs when they are encoded in the rRNA operon. Processes pre-crRNA and tracrRNA of type II CRISPR loci if present in the organism. This Coxiella burnetii (strain CbuG_Q212) (Coxiella burnetii (strain Q212)) protein is Ribonuclease 3.